A 265-amino-acid polypeptide reads, in one-letter code: Phosphate import ATP-binding protein PstB (265 aa).

The 243-residue stretch at 18–260 (MECRDCHVYY…PEDPRTESYI (243 aa)) folds into the ABC transporter domain. Residue 50-57 (GPSGCGKS) participates in ATP binding.

Belongs to the ABC transporter superfamily. Phosphate importer (TC 3.A.1.7) family. In terms of assembly, the complex is composed of two ATP-binding proteins (PstB), two transmembrane proteins (PstC and PstA) and a solute-binding protein (PstS).

It localises to the cell inner membrane. The catalysed reaction is phosphate(out) + ATP + H2O = ADP + 2 phosphate(in) + H(+). Part of the ABC transporter complex PstSACB involved in phosphate import. Responsible for energy coupling to the transport system. The sequence is that of Phosphate import ATP-binding protein PstB from Ruegeria pomeroyi (strain ATCC 700808 / DSM 15171 / DSS-3) (Silicibacter pomeroyi).